We begin with the raw amino-acid sequence, 608 residues long: V-type ATP synthase subunit I (608 aa).

9 helical membrane-spanning segments follow: residues 308 to 325 (ISFI…MIIG), 327 to 346 (AAYG…SFLL), 356 to 376 (GLIF…GTWF), 405 to 425 (IIFI…VWNF), 438 to 458 (IAQI…LNLI), 464 to 484 (FPMY…VFVF), 495 to 515 (CILK…SGFA), 517 to 537 (IISY…SASF), and 550 to 570 (IGLI…NIML).

It belongs to the V-ATPase 116 kDa subunit family.

It localises to the cell membrane. Its function is as follows. Produces ATP from ADP in the presence of a proton gradient across the membrane. This chain is V-type ATP synthase subunit I (atpI), found in Borreliella burgdorferi (strain ATCC 35210 / DSM 4680 / CIP 102532 / B31) (Borrelia burgdorferi).